The sequence spans 617 residues: uncharacterized protein (617 aa).

Low complexity-rich tracts occupy residues 1-16 (MSKCATPTPSTSSNSS) and 36-45 (STTSSNGSNS). Residues 1–49 (MSKCATPTPSTSSNSSDEAKRSPQPMSRGFPQRNMSTTSSNGSNSPRHR) are disordered. The next 3 membrane-spanning stretches (helical) occupy residues 219-239 (LMIGAAGGVGGVLIGLTGGLA), 262-282 (TAGAAVLGTTMGVAGAGFTGY), and 427-447 (PITLIGFSLGARVIFHCLLTM).

This sequence belongs to the TMCO4 family.

The protein localises to the membrane. This is an uncharacterized protein from Caenorhabditis elegans.